A 372-amino-acid polypeptide reads, in one-letter code: tRNA-specific 2-thiouridylase MnmA (372 aa).

Residues 9-16 (GMSGGVDS) and Met-35 contribute to the ATP site. The segment at 95–97 (NPD) is interaction with target base in tRNA. The active-site Nucleophile is the Cys-100. Cys-100 and Cys-201 form a disulfide bridge. Gly-124 contributes to the ATP binding site. Positions 151 to 153 (KDQ) are interaction with tRNA. Cys-201 functions as the Cysteine persulfide intermediate in the catalytic mechanism. Positions 317–318 (RY) are interaction with tRNA.

The protein belongs to the MnmA/TRMU family.

The protein localises to the cytoplasm. The catalysed reaction is S-sulfanyl-L-cysteinyl-[protein] + uridine(34) in tRNA + AH2 + ATP = 2-thiouridine(34) in tRNA + L-cysteinyl-[protein] + A + AMP + diphosphate + H(+). In terms of biological role, catalyzes the 2-thiolation of uridine at the wobble position (U34) of tRNA, leading to the formation of s(2)U34. The polypeptide is tRNA-specific 2-thiouridylase MnmA (Janthinobacterium sp. (strain Marseille) (Minibacterium massiliensis)).